The chain runs to 97 residues: Transcription and mRNA export factor SUS1 (97 aa).

Belongs to the ENY2 family. As to quaternary structure, component of the nuclear pore complex (NPC)-associated TREX-2 complex (transcription and export complex 2), composed of at least SUS1, SAC3, THP1, SEM1, and CDC31. TREX-2 contains 2 SUS1 chains. The TREX-2 complex interacts with the nucleoporin NUP1. Component of the 1.8 MDa SAGA transcription coactivator-HAT complex. SAGA is built of 5 distinct domains with specialized functions. Within the SAGA complex, SUS1, SGF11, SGF73 and UBP8 form an additional subcomplex of SAGA called the DUB module (deubiquitination module). Interacts directly with THP1, SAC3, SGF11, and with the RNA polymerase II.

Its subcellular location is the nucleus. The protein resides in the nucleoplasm. The protein localises to the cytoplasm. It is found in the P-body. Involved in mRNA export coupled transcription activation by association with both the TREX-2 and the SAGA complexes. At the promoters, SAGA is required for recruitment of the basal transcription machinery. It influences RNA polymerase II transcriptional activity through different activities such as TBP interaction and promoter selectivity, interaction with transcription activators, and chromatin modification through histone acetylation and deubiquitination. Within the SAGA complex, participates in a subcomplex required for deubiquitination of H2B and for the maintenance of steady-state H3 methylation levels. The TREX-2 complex functions in docking export-competent ribonucleoprotein particles (mRNPs) to the nuclear entrance of the nuclear pore complex (nuclear basket). TREX-2 participates in mRNA export and accurate chromatin positioning in the nucleus by tethering genes to the nuclear periphery. May also be involved in cytoplasmic mRNA decay by interaction with components of P-bodies. The protein is Transcription and mRNA export factor SUS1 of Meyerozyma guilliermondii (strain ATCC 6260 / CBS 566 / DSM 6381 / JCM 1539 / NBRC 10279 / NRRL Y-324) (Yeast).